Consider the following 565-residue polypeptide: Mitochondrial distribution and morphology protein 34 (565 aa).

Positions 1 to 208 (MAFNFNWSPL…VPEYRDRESE (208 aa)) constitute an SMP-LTD domain. The span at 209 to 220 (SVNTLDLSSESG) shows a compositional bias: polar residues. Disordered stretches follow at residues 209 to 241 (SVNTLDLSSESGPGQDPLASPPQDPVDASGNAL), 347 to 463 (FGSY…SRSA), and 533 to 565 (MQEQKIDPSGSRPFPDFWDDHSREEIPPPAYGH). A compositionally biased stretch (basic residues) spans 353–367 (PGRHSRSHTKKRKKR). Residues 368-378 (VVDLRRPKTTD) are compositionally biased toward basic and acidic residues. The span at 382–391 (SVSGDSVFSS) shows a compositional bias: low complexity. 2 stretches are compositionally biased toward polar residues: residues 392 to 402 (ENATSAPTIFS) and 439 to 463 (QGDQTLRRSNLSMSEAAQPSSSRSA).

The protein belongs to the MDM34 family. Component of the ER-mitochondria encounter structure (ERMES) or MDM complex, composed of mmm1, mdm10, mdm12 and mdm34.

Its subcellular location is the mitochondrion outer membrane. Component of the ERMES/MDM complex, which serves as a molecular tether to connect the endoplasmic reticulum (ER) and mitochondria. Components of this complex are involved in the control of mitochondrial shape and protein biogenesis, and function in nonvesicular lipid trafficking between the ER and mitochondria. Mdm34 is required for the interaction of the ER-resident membrane protein mmm1 and the outer mitochondrial membrane-resident beta-barrel protein mdm10. The polypeptide is Mitochondrial distribution and morphology protein 34 (Talaromyces marneffei (strain ATCC 18224 / CBS 334.59 / QM 7333) (Penicillium marneffei)).